The primary structure comprises 181 residues: ATP synthase subunit delta (181 aa).

This sequence belongs to the ATPase delta chain family. F-type ATPases have 2 components, F(1) - the catalytic core - and F(0) - the membrane proton channel. F(1) has five subunits: alpha(3), beta(3), gamma(1), delta(1), epsilon(1). F(0) has three main subunits: a(1), b(2) and c(10-14). The alpha and beta chains form an alternating ring which encloses part of the gamma chain. F(1) is attached to F(0) by a central stalk formed by the gamma and epsilon chains, while a peripheral stalk is formed by the delta and b chains.

The protein localises to the cell inner membrane. F(1)F(0) ATP synthase produces ATP from ADP in the presence of a proton or sodium gradient. F-type ATPases consist of two structural domains, F(1) containing the extramembraneous catalytic core and F(0) containing the membrane proton channel, linked together by a central stalk and a peripheral stalk. During catalysis, ATP synthesis in the catalytic domain of F(1) is coupled via a rotary mechanism of the central stalk subunits to proton translocation. In terms of biological role, this protein is part of the stalk that links CF(0) to CF(1). It either transmits conformational changes from CF(0) to CF(1) or is implicated in proton conduction. This is ATP synthase subunit delta from Chlorobaculum tepidum (strain ATCC 49652 / DSM 12025 / NBRC 103806 / TLS) (Chlorobium tepidum).